The chain runs to 278 residues: Probable velvet family sexual development regulator SCHCODRAFT_28806 (278 aa).

Residues 51–255 (GRTIRASLDE…ARVGVRLSVR (205 aa)) form the Velvet domain. The disordered stretch occupies residues 257–278 (TGKKATTKRRKRSDSFDEDDSS).

Belongs to the velvet family.

It localises to the nucleus. In terms of biological role, velvet-domain-containing protein that probably acts as a positive regulator of sexual development. This chain is Probable velvet family sexual development regulator SCHCODRAFT_28806, found in Schizophyllum commune (strain H4-8 / FGSC 9210) (Split gill fungus).